A 189-amino-acid chain; its full sequence is Movement protein (189 aa).

This sequence belongs to the tombusvirus/aureusvirus movement protein p22 family.

It localises to the host membrane. Its function is as follows. Transports viral genome to neighboring plant cells directly through plasmosdesmata, without any budding. The movement protein allows efficient cell to cell propagation, by bypassing the host cell wall barrier. The sequence is that of Movement protein from Cymbidium ringspot virus (CymRSV).